Here is a 166-residue protein sequence, read N- to C-terminus: Phosphopantetheine adenylyltransferase (166 aa).

Position 9 (Thr-9) interacts with substrate. Residues 9–10 and His-17 each bind ATP; that span reads TF. Positions 41, 73, and 87 each coordinate substrate. ATP contacts are provided by residues 88–90, Glu-98, and 123–129; these read GLR and YQFISGT.

It belongs to the bacterial CoaD family. In terms of assembly, homohexamer. Requires Mg(2+) as cofactor.

The protein resides in the cytoplasm. It catalyses the reaction (R)-4'-phosphopantetheine + ATP + H(+) = 3'-dephospho-CoA + diphosphate. It participates in cofactor biosynthesis; coenzyme A biosynthesis; CoA from (R)-pantothenate: step 4/5. In terms of biological role, reversibly transfers an adenylyl group from ATP to 4'-phosphopantetheine, yielding dephospho-CoA (dPCoA) and pyrophosphate. This Burkholderia mallei (strain NCTC 10229) protein is Phosphopantetheine adenylyltransferase.